Here is a 794-residue protein sequence, read N- to C-terminus: Transcription factor TOG1 (794 aa).

The Zn(2+) site is built by cysteine 18, cysteine 21, cysteine 28, cysteine 34, cysteine 37, and cysteine 44. A DNA-binding region (zn(2)-C6 fungal-type) is located at residues 18 to 44 (CDRCHRKKIKCNSKKPCFGCIGSQSKC).

The protein localises to the nucleus. In terms of biological role, transcriptional activator required for growth on non-fermentable carbon sources and that regulates genes involved in fatty acid utilization. Acts as a direct activator that binds the promoters of oleate utilizing genes, encoded key enzymes in beta-oxidation and NADPH regeneration (POX1, FOX2,POT1 and IDP2), the glyoxylate shunt (MLS1 and ICL1), and gluconeogenesis (PCK1 and FBP1). Also regulates the abundance of peroxisomes that are vital for fatty acid oxidation. This chain is Transcription factor TOG1, found in Saccharomyces cerevisiae (strain ATCC 204508 / S288c) (Baker's yeast).